We begin with the raw amino-acid sequence, 98 residues long: Large ribosomal subunit protein eL14 (98 aa).

Belongs to the eukaryotic ribosomal protein eL14 family.

The protein is Large ribosomal subunit protein eL14 of Thermofilum pendens (strain DSM 2475 / Hrk 5).